Consider the following 246-residue polypeptide: 5'-nucleotidase SurE (246 aa).

Positions 8, 9, 39, and 91 each coordinate a divalent metal cation.

The protein belongs to the SurE nucleotidase family. It depends on a divalent metal cation as a cofactor.

It localises to the cytoplasm. The catalysed reaction is a ribonucleoside 5'-phosphate + H2O = a ribonucleoside + phosphate. Its function is as follows. Nucleotidase that shows phosphatase activity on nucleoside 5'-monophosphates. The protein is 5'-nucleotidase SurE of Dechloromonas aromatica (strain RCB).